We begin with the raw amino-acid sequence, 447 residues long: Na(+)-translocating NADH-quinone reductase subunit A (447 aa).

This sequence belongs to the NqrA family. As to quaternary structure, composed of six subunits; NqrA, NqrB, NqrC, NqrD, NqrE and NqrF.

It catalyses the reaction a ubiquinone + n Na(+)(in) + NADH + H(+) = a ubiquinol + n Na(+)(out) + NAD(+). Functionally, NQR complex catalyzes the reduction of ubiquinone-1 to ubiquinol by two successive reactions, coupled with the transport of Na(+) ions from the cytoplasm to the periplasm. NqrA to NqrE are probably involved in the second step, the conversion of ubisemiquinone to ubiquinol. This chain is Na(+)-translocating NADH-quinone reductase subunit A, found in Hahella chejuensis (strain KCTC 2396).